Here is an 886-residue protein sequence, read N- to C-terminus: MAVACAAPGSTFSKQLLFFLLVLVLFCDACQKVSLHVPSHLKAETPVGKVNLEECLKSPSLILSSDPAFRILEDGTIYTTHDLLLSSEKRGFSILLSDGQGQEQKKLEVVLSAREKKVFRKRHTKEPVHNRSKRRWAPIPCSLMENSLGPFPQHIQQIQSDAAQNYTIFYSISGPGVDKEPYNLFYIEKDTGDIYCTRSIDREQYDQFLVYGYATTADGYAPDYPLPLLFKVEDDNDNAPYFETKLTVFSVPENCRSGTSVGQVTAIDKDEPGTLHTRLKYKILQQIPDQPKHFSIHPDTGVITTTTPLLDREKCDTYKLVMEVRDMGGQPFGLFTTGTITISLEDENDNSPYFTQTSYTTEVEENRIDVEILRMVVHDQDLPNTPHSKAVYTILKGNENGNFKITTDPNTNEGVLCVVKPLNYEVSRQVTLQIGVLNEAQFTNAANAQPPTMCTTTVTVKIKDRDEGPECQPPVKVIQSKDGLPAGQELLGYKAVDPETSSGEGLRYEMVGDEDNWFEINKITGDLRTVKVLDRESKFVKNNQYNISVVATDTAGRSCTGTLVVLLEDFNDHPPQIDKEVTICQQEKDFAVLEPIDLDGPDNGPPFQFLLDNSSSKLWTLESQDGKRAILRQRHNLNYNYYSVPIQIQDRHGFSAKHVLSVRVCDCTTPTECRMAVKEERDAKPNIILGKWAILAMVLGSALLLCILFTCFCVTTTKRTVKKCFPDDVAQQNLIVSNTEGPGEEVTEANIRLPTQTANICDTSMSVGTLGGQGIKTQQSFEMVKGGHTLESHKGGVLGAAEPGRYAYTDWQTFTQPRLGEKVYLCGQAEEHKHCEDYVRPYNYEGKGSMAGSVGCCSDRQEEEGLEFLDQLEPKFRTLAKTCVKK.

An N-terminal signal peptide occupies residues 1–29 (MAVACAAPGSTFSKQLLFFLLVLVLFCDA). The propeptide occupies 30 to 134 (CQKVSLHVPS…KEPVHNRSKR (105 aa)). N130 and N165 each carry an N-linked (GlcNAc...) asparagine glycan. Cadherin domains follow at residues 135–242 (RWAP…APYF), 243–354 (ETKL…SPYF), 355–471 (TQTS…GPEC), 472–575 (QPPV…DHPP), and 576–682 (QIDK…EERD). Residues 135–691 (RWAPIPCSLM…DAKPNIILGK (557 aa)) are Extracellular-facing. Position 385 is a phosphothreonine (T385). N546 carries an N-linked (GlcNAc...) (high mannose) asparagine glycan. N613 carries N-linked (GlcNAc...) asparagine glycosylation. A helical membrane pass occupies residues 692 to 714 (WAILAMVLGSALLLCILFTCFCV). Topologically, residues 715–886 (TTTKRTVKKC…RTLAKTCVKK (172 aa)) are cytoplasmic.

Binds to JUP/plakoglobin. In terms of tissue distribution, expressed in the epidermis and inner root sheaths of hair follicles (at protein level).

The protein localises to the cell membrane. It localises to the cell junction. Its subcellular location is the desmosome. Its function is as follows. A component of desmosome cell-cell junctions which are required for positive regulation of cellular adhesion. Required for desmosome adhesion strength between the granular layers of the epidermis, as a result moderates epidermal proliferation and differentiation. Is therefore required to maintain postnatal epidermal barrier function and normal hair follicle morphology into adulthood. The chain is Desmocollin-1 (Dsc1) from Mus musculus (Mouse).